The chain runs to 65 residues: Carboxypeptidase A inhibitor (65 aa).

The protein belongs to the protease inhibitor I44 family.

It is found in the secreted. In terms of biological role, inhibits carboxypeptidase A. The protein is Carboxypeptidase A inhibitor of Ascaris suum (Pig roundworm).